A 729-amino-acid chain; its full sequence is MAEKENVHPQVISSFPTPSKALKLSEKSSLKDVQTDNAAVPLVVDETSYPEPTCEFYGGLLGPQLPEAERFVLDPALVEEYRHKKPPFGFNGLGEVVYLRTYAREKDNGQSEVWLDTVQRVVTGTFEVLQHHVVNKLHCHWDAQKAKERSEDMFRRIFEMKFLPPGRGLWAMGSPICRKKGFAAALNNCAFVSTATLEKDRVGPFLFLMDASMLGVGVGFDNAGAGSFTVPGPDDTQPTYKFMIPDKREGWVESLKRLLKAHFCHTADVEFDYSKIREMGTKLKTFGGTSSGPGPLINLHKSIRKILVGEKGKPISVTCITDIMNLIGVCTVAGNIRRSAEIAFGEADCKEFLDLKSYETNPHRVEYGWASNNSIFAKVGMDYSDACERVRTNGEPGFAWLSNMQAFSRMNGKPDYRDQRVLGGNPCLEQSLESMELCCLVETFPDKHETLEDFKRTLYSALLYAKTVTLLPLHWRESNEIMLRNRRIGCSVSGIAQFITNRGLHELKTWLEEGYDILHQYDCQISEWLCIRQSIKLTSVKPSGTISLVAGATPGVHYPESCYYTRRLRMARDSPLLERLIKAGYHVEPCCVAPDVTAIVEFPVAAGNSIRTTRDITMWEQLSLAAFMQRYWADNQVSATITFDPETEGLHLNQALQYFQYQLKGISFLPRYPMGAFKQMPYEAITKEQYEEAIRKVKEDVSLSSANAIAETVEENQQTFCDNDRCIKL.

Cys-189 and Cys-438 are oxidised to a cystine. Active-site residues include Cys-427 and Glu-429.

This sequence belongs to the class II ribonucleoside-triphosphate reductase family. In terms of assembly, monomer. Adenosylcob(III)alamin is required as a cofactor.

It catalyses the reaction a 2'-deoxyribonucleoside 5'-triphosphate + [thioredoxin]-disulfide + H2O = a ribonucleoside 5'-triphosphate + [thioredoxin]-dithiol. The polypeptide is Adenosylcobalamin-dependent ribonucleoside-triphosphate reductase (rnr) (Euglena gracilis).